Here is a 246-residue protein sequence, read N- to C-terminus: MNTQTALRLGVNIDHIATIRQARGTPYPDLVEAVRIVEEAGADIITLHLREDRRHIQDRDVEMLRERITTGMNLEMAATEEMQAIALRIRPQACCIVPERREELTTEGGLDVLGQEARLKAFCAPLLAAGIEVSLFVEPDLAHLDAALRIGAPVVELHTGAYASAAPGPDREAHLERIVAAAAHGHARGLVVNAGHGLDYENVLPIAAIPVMHELNIGHAIVARALFTGIGEAVRAMRAAMDRARR.

Position 12 (asparagine 12) interacts with 3-amino-2-oxopropyl phosphate. 1-deoxy-D-xylulose 5-phosphate is bound at residue 14–15; sequence DH. Residue arginine 23 coordinates 3-amino-2-oxopropyl phosphate. Histidine 48 functions as the Proton acceptor in the catalytic mechanism. 1-deoxy-D-xylulose 5-phosphate is bound by residues arginine 50 and histidine 55. The Proton acceptor role is filled by glutamate 75. Residue threonine 105 participates in 1-deoxy-D-xylulose 5-phosphate binding. The active-site Proton donor is histidine 196. 3-amino-2-oxopropyl phosphate contacts are provided by residues glycine 197 and 218-219; that span reads GH.

Belongs to the PNP synthase family. As to quaternary structure, homooctamer; tetramer of dimers.

It localises to the cytoplasm. It catalyses the reaction 3-amino-2-oxopropyl phosphate + 1-deoxy-D-xylulose 5-phosphate = pyridoxine 5'-phosphate + phosphate + 2 H2O + H(+). It functions in the pathway cofactor biosynthesis; pyridoxine 5'-phosphate biosynthesis; pyridoxine 5'-phosphate from D-erythrose 4-phosphate: step 5/5. Catalyzes the complicated ring closure reaction between the two acyclic compounds 1-deoxy-D-xylulose-5-phosphate (DXP) and 3-amino-2-oxopropyl phosphate (1-amino-acetone-3-phosphate or AAP) to form pyridoxine 5'-phosphate (PNP) and inorganic phosphate. In Thioalkalivibrio sulfidiphilus (strain HL-EbGR7), this protein is Pyridoxine 5'-phosphate synthase.